The primary structure comprises 245 residues: tRNA pseudouridine synthase A (245 aa).

Aspartate 52 (nucleophile) is an active-site residue. A substrate-binding site is contributed by tyrosine 111.

It belongs to the tRNA pseudouridine synthase TruA family. In terms of assembly, homodimer.

The enzyme catalyses uridine(38/39/40) in tRNA = pseudouridine(38/39/40) in tRNA. Formation of pseudouridine at positions 38, 39 and 40 in the anticodon stem and loop of transfer RNAs. The protein is tRNA pseudouridine synthase A of Afipia carboxidovorans (strain ATCC 49405 / DSM 1227 / KCTC 32145 / OM5) (Oligotropha carboxidovorans).